Here is a 270-residue protein sequence, read N- to C-terminus: Myeloid leukemia factor 1 (270 aa).

Residues Ser-6, Ser-8, Ser-32, and Ser-34 each carry the phosphoserine modification. Residues 50-125 (RARNRMGHED…VGDEPPKVFQ (76 aa)) are interaction with COPS3. 2 disordered regions span residues 127–148 (STQTRRAPGGIKETRKALRDSD) and 221–247 (RSVAHENSGSRELKRREKHHQSPAIEH). The span at 138–148 (KETRKALRDSD) shows a compositional bias: basic and acidic residues.

Belongs to the MLF family. As to quaternary structure, interacts with CENPU. Also interacts with NRBP1/MADM, YWHAZ/14-3-3-zeta and HNRPUL2/MANP. NRBP1 recruits a serine kinase which phosphorylates both itself and MLF1. Phosphorylated MLF1 then binds to YWHAZ and is retained in the cytoplasm. Retained in the nucleus by binding to HNRPUL2. Binds to COPS3/CSN3 which is required for suppression of COP1 and activation of p53. Post-translationally, phosphorylation is required for binding to YWHAZ.

It is found in the cytoplasm. It localises to the nucleus. The protein localises to the cell projection. Its subcellular location is the cilium. The protein resides in the cytoskeleton. It is found in the cilium basal body. Functionally, involved in lineage commitment of primary hemopoietic progenitors by restricting erythroid formation and enhancing myeloid formation. Interferes with erythropoietin-induced erythroid terminal differentiation by preventing cells from exiting the cell cycle through suppression of CDKN1B/p27Kip1 levels. Suppresses COP1 activity via CSN3 which activates p53 and induces cell cycle arrest. Binds DNA and affects the expression of a number of genes so may function as a transcription factor in the nucleus. This Bos taurus (Bovine) protein is Myeloid leukemia factor 1 (MLF1).